Reading from the N-terminus, the 333-residue chain is Adenosine deaminase (333 aa).

The Zn(2+) site is built by H12 and H14. Substrate contacts are provided by H14, D16, and G170. H197 provides a ligand contact to Zn(2+). Residue E200 is the Proton donor of the active site. D278 serves as a coordination point for Zn(2+). Position 279 (D279) interacts with substrate.

The protein belongs to the metallo-dependent hydrolases superfamily. Adenosine and AMP deaminases family. Adenosine deaminase subfamily. The cofactor is Zn(2+).

It catalyses the reaction adenosine + H2O + H(+) = inosine + NH4(+). The catalysed reaction is 2'-deoxyadenosine + H2O + H(+) = 2'-deoxyinosine + NH4(+). In terms of biological role, catalyzes the hydrolytic deamination of adenosine and 2-deoxyadenosine. The chain is Adenosine deaminase from Escherichia coli O7:K1 (strain IAI39 / ExPEC).